The following is a 309-amino-acid chain: Thiamine-monophosphate kinase (309 aa).

Mg(2+) contacts are provided by aspartate 41 and aspartate 55. Histidine 62 lines the substrate pocket. 3 residues coordinate Mg(2+): aspartate 83, aspartate 128, and aspartate 215. Residue 127–128 (GD) coordinates ATP. Residue serine 217 coordinates ATP. Aspartate 218 provides a ligand contact to Mg(2+). Glutamate 268 lines the substrate pocket.

Belongs to the thiamine-monophosphate kinase family.

The catalysed reaction is thiamine phosphate + ATP = thiamine diphosphate + ADP. Its pathway is cofactor biosynthesis; thiamine diphosphate biosynthesis; thiamine diphosphate from thiamine phosphate: step 1/1. Its function is as follows. Catalyzes the ATP-dependent phosphorylation of thiamine-monophosphate (TMP) to form thiamine-pyrophosphate (TPP), the active form of vitamin B1. The chain is Thiamine-monophosphate kinase from Methanopyrus kandleri (strain AV19 / DSM 6324 / JCM 9639 / NBRC 100938).